Consider the following 348-residue polypeptide: MRILGIETSCDETGVAIYDEQRGLIANQLYSQIEMHADYGGVVPELASRDHIRKTLPLIQAALKEANLTASEIDGIAYTAGPGLVGALLVGATIARALAYAWNVPALAVHHMEGHLMAPMLEENPPEFPFIALLISGGHTQLIKVAGVGEYEILGESIDDAAGEAFDKTGKLLGLDYPAGVALSQLAEKGTPNRFVFPRPMTDRPGLDFSFSGLKTFAANTINAQLDENGQLNEQTRCDIAHAFQQAVVDTIIIKCKRALQQTGYSRLVMAGGVSANKQLRAELATMMQALKGQVYYPRPQFCTDNGAMIAYTGFIRLKKGEKTDLSVSVKPRWPMTTLLKLSAHHKV.

Fe cation contacts are provided by His111 and His115. Substrate contacts are provided by residues 134–138 (LISGG), Asp167, Gly180, and Asn277. Asp305 provides a ligand contact to Fe cation.

The protein belongs to the KAE1 / TsaD family. Fe(2+) is required as a cofactor.

The protein resides in the cytoplasm. It carries out the reaction L-threonylcarbamoyladenylate + adenosine(37) in tRNA = N(6)-L-threonylcarbamoyladenosine(37) in tRNA + AMP + H(+). Functionally, required for the formation of a threonylcarbamoyl group on adenosine at position 37 (t(6)A37) in tRNAs that read codons beginning with adenine. Is involved in the transfer of the threonylcarbamoyl moiety of threonylcarbamoyl-AMP (TC-AMP) to the N6 group of A37, together with TsaE and TsaB. TsaD likely plays a direct catalytic role in this reaction. The sequence is that of tRNA N6-adenosine threonylcarbamoyltransferase from Haemophilus ducreyi (strain 35000HP / ATCC 700724).